The primary structure comprises 358 residues: Peptide chain release factor 1 (358 aa).

Q236 carries the post-translational modification N5-methylglutamine.

This sequence belongs to the prokaryotic/mitochondrial release factor family. Methylated by PrmC. Methylation increases the termination efficiency of RF1.

It localises to the cytoplasm. In terms of biological role, peptide chain release factor 1 directs the termination of translation in response to the peptide chain termination codons UAG and UAA. The sequence is that of Peptide chain release factor 1 from Corynebacterium glutamicum (strain ATCC 13032 / DSM 20300 / JCM 1318 / BCRC 11384 / CCUG 27702 / LMG 3730 / NBRC 12168 / NCIMB 10025 / NRRL B-2784 / 534).